A 377-amino-acid chain; its full sequence is tRNA-specific 2-thiouridylase MnmA (377 aa).

Residues 18 to 25 (GMSGGVDS) and methionine 44 contribute to the ATP site. Residues 104–106 (NPD) form an interaction with target base in tRNA region. Catalysis depends on cysteine 109, which acts as the Nucleophile. Cysteine 109 and cysteine 209 are disulfide-bonded. ATP is bound at residue glycine 134. The segment at 159–161 (KDQ) is interaction with tRNA. Residue cysteine 209 is the Cysteine persulfide intermediate of the active site. Residues 324-325 (RY) form an interaction with tRNA region.

Belongs to the MnmA/TRMU family.

It is found in the cytoplasm. The catalysed reaction is S-sulfanyl-L-cysteinyl-[protein] + uridine(34) in tRNA + AH2 + ATP = 2-thiouridine(34) in tRNA + L-cysteinyl-[protein] + A + AMP + diphosphate + H(+). Its function is as follows. Catalyzes the 2-thiolation of uridine at the wobble position (U34) of tRNA, leading to the formation of s(2)U34. The sequence is that of tRNA-specific 2-thiouridylase MnmA from Photobacterium profundum (strain SS9).